An 844-amino-acid chain; its full sequence is Translation initiation factor IF-2 (844 aa).

Polar residues predominate over residues R120 to K132. The segment at R120–P220 is disordered. The span at D161–N175 shows a compositional bias: basic and acidic residues. Basic residues predominate over residues S205 to N219. The region spanning S343 to E510 is the tr-type G domain. The tract at residues G352–T359 is G1. GTP is bound at residue G352–T359. The tract at residues G377–H381 is G2. Residues D398–G401 form a G3 region. GTP is bound by residues D398 to H402 and N452 to D455. The G4 stretch occupies residues N452 to D455. Positions S488–K490 are G5.

The protein belongs to the TRAFAC class translation factor GTPase superfamily. Classic translation factor GTPase family. IF-2 subfamily.

It localises to the cytoplasm. One of the essential components for the initiation of protein synthesis. Protects formylmethionyl-tRNA from spontaneous hydrolysis and promotes its binding to the 30S ribosomal subunits. Also involved in the hydrolysis of GTP during the formation of the 70S ribosomal complex. The polypeptide is Translation initiation factor IF-2 (Francisella philomiragia subsp. philomiragia (strain ATCC 25017 / CCUG 19701 / FSC 153 / O#319-036)).